A 32-amino-acid polypeptide reads, in one-letter code: Glutathione S-transferase 8.2 (32 aa).

21–22 (QS) provides a ligand contact to glutathione.

The protein belongs to the GST superfamily. Alpha family. As to quaternary structure, homodimer. In terms of processing, the N-terminus is blocked.

The protein resides in the cytoplasm. The enzyme catalyses RX + glutathione = an S-substituted glutathione + a halide anion + H(+). Conjugation of reduced glutathione to a wide number of exogenous and endogenous hydrophobic electrophiles. The protein is Glutathione S-transferase 8.2 of Dicentrarchus labrax (European seabass).